The primary structure comprises 416 residues: Transcription factor PIL1 (416 aa).

Disordered regions lie at residues 1-24 (MEAK…NIKP), 89-113 (VSQS…KLKS), and 197-231 (ESTY…KRST). Residues 8–22 (SSSSEPNMISPSSNI) are compositionally biased toward low complexity. Residues 95–124 (QQDKETNEQMNNNKKKLKSSKIEFERNVSK) adopt a coiled-coil conformation. The span at 216 to 229 (VHARTRKPVTKRKR) shows a compositional bias: basic residues. The 50-residue stretch at 229–278 (RSTEVHKLYERKRRDEFNKKMRALQDLLPNCYKDDKASLLDEAIKYMRTL) folds into the bHLH domain.

As to quaternary structure, homodimer. Interacts with APRR1/TOC1. Associates to PTAC12/HMR/PAP5 which acts as a transcriptional coactivator. In terms of tissue distribution, mainly expressed in stems, fruits and flowers and, to a lower extent, in leaves, seedlings and roots. Accumulates in etiolated seedlings.

Its subcellular location is the nucleus. Transcription factor. Involved in responses to transient and long-term shade. Required for the light-mediated inhibition of hypocotyl elongation. Necessary for rapid light-induced expression of the photomorphogenesis- and circadian-related gene APRR9. Seems to play a role in multiple PHYB responses, such as flowering transition and petiole elongation. The sequence is that of Transcription factor PIL1 from Arabidopsis thaliana (Mouse-ear cress).